We begin with the raw amino-acid sequence, 415 residues long: MDELLEKAKKVREAWDVLRNATTREKNKAIKKIAEKLDERRKEILEANRIDVEKARERGVKESLVDRLALNDKRIDEMIKACETVIGLKDPVGEVIDSWVREDGLRIARVRVPIGPIGIIYESRPNVTVETTILALKSGNTILLRGGSDALNSNKAIVSAIKEALKETEIPESSVEFIENTDRSLVLEMIRLREYLSLVIPRGGYGLISFVRDNATVPVLETGVGNCHIFVDESADLKKAVPVIINAKTQRPGTCNAAEKLLVHEKIAKEFLPVIVEELRKHGVEVRGCEKTREIVPDVVPATEDDWPTEYLDLIIAIKVVKNVDEAIEHIKKYSTGHSESILTENYSNAKKFVSEIDAAAVYVNASTRFTDGGQFGFGAEIGISTQRFHARGPVGLRELTTYKFVVLGNYHVRE.

It belongs to the gamma-glutamyl phosphate reductase family.

Its subcellular location is the cytoplasm. It catalyses the reaction L-glutamate 5-semialdehyde + phosphate + NADP(+) = L-glutamyl 5-phosphate + NADPH + H(+). Its pathway is amino-acid biosynthesis; L-proline biosynthesis; L-glutamate 5-semialdehyde from L-glutamate: step 2/2. Its function is as follows. Catalyzes the NADPH-dependent reduction of L-glutamate 5-phosphate into L-glutamate 5-semialdehyde and phosphate. The product spontaneously undergoes cyclization to form 1-pyrroline-5-carboxylate. The chain is Gamma-glutamyl phosphate reductase from Thermotoga sp. (strain RQ2).